A 142-amino-acid chain; its full sequence is Protein archease (142 aa).

Residues Asp-12, Asp-141, and Leu-142 each coordinate Ca(2+).

Belongs to the archease family.

Activates the tRNA-splicing ligase complex by facilitating the enzymatic turnover of catalytic subunit RtcB. Acts by promoting the guanylylation of RtcB, a key intermediate step in tRNA ligation. Can also alter the NTP specificity of RtcB such that ATP, dGTP or ITP is used efficiently. In Thermococcus gammatolerans (strain DSM 15229 / JCM 11827 / EJ3), this protein is Protein archease.